The sequence spans 338 residues: Holliday junction branch migration complex subunit RuvB (338 aa).

The large ATPase domain (RuvB-L) stretch occupies residues 1-180 (MERLLDNKFS…FGIIERLDYY (180 aa)). Leu19, Arg20, Gly61, Lys64, Thr65, Thr66, Arg170, Tyr180, and Arg217 together coordinate ATP. Thr65 provides a ligand contact to Mg(2+). The tract at residues 181-251 (TVEELSQIVM…VAKSGLEMFE (71 aa)) is small ATPAse domain (RuvB-S). The segment at 254–338 (EYGLDLVDRN…FNVKESGDKR (85 aa)) is head domain (RuvB-H). The DNA site is built by Lys309 and Arg314.

This sequence belongs to the RuvB family. Homohexamer. Forms an RuvA(8)-RuvB(12)-Holliday junction (HJ) complex. HJ DNA is sandwiched between 2 RuvA tetramers; dsDNA enters through RuvA and exits via RuvB. An RuvB hexamer assembles on each DNA strand where it exits the tetramer. Each RuvB hexamer is contacted by two RuvA subunits (via domain III) on 2 adjacent RuvB subunits; this complex drives branch migration. In the full resolvosome a probable DNA-RuvA(4)-RuvB(12)-RuvC(2) complex forms which resolves the HJ.

The protein localises to the cytoplasm. It catalyses the reaction ATP + H2O = ADP + phosphate + H(+). Functionally, the RuvA-RuvB-RuvC complex processes Holliday junction (HJ) DNA during genetic recombination and DNA repair, while the RuvA-RuvB complex plays an important role in the rescue of blocked DNA replication forks via replication fork reversal (RFR). RuvA specifically binds to HJ cruciform DNA, conferring on it an open structure. The RuvB hexamer acts as an ATP-dependent pump, pulling dsDNA into and through the RuvAB complex. RuvB forms 2 homohexamers on either side of HJ DNA bound by 1 or 2 RuvA tetramers; 4 subunits per hexamer contact DNA at a time. Coordinated motions by a converter formed by DNA-disengaged RuvB subunits stimulates ATP hydrolysis and nucleotide exchange. Immobilization of the converter enables RuvB to convert the ATP-contained energy into a lever motion, pulling 2 nucleotides of DNA out of the RuvA tetramer per ATP hydrolyzed, thus driving DNA branch migration. The RuvB motors rotate together with the DNA substrate, which together with the progressing nucleotide cycle form the mechanistic basis for DNA recombination by continuous HJ branch migration. Branch migration allows RuvC to scan DNA until it finds its consensus sequence, where it cleaves and resolves cruciform DNA. This chain is Holliday junction branch migration complex subunit RuvB, found in Caldicellulosiruptor saccharolyticus (strain ATCC 43494 / DSM 8903 / Tp8T 6331).